The following is a 317-amino-acid chain: Dehydrogenase/reductase SDR family member 12 (317 aa).

NAD(+) is bound by residues Ser50 and Ile52. Ser175 is a binding site for substrate. Tyr201, Lys205, and Thr234 together coordinate NAD(+). Tyr201 acts as the Proton acceptor in catalysis.

Belongs to the short-chain dehydrogenases/reductases (SDR) family.

Putative oxidoreductase. This is Dehydrogenase/reductase SDR family member 12 from Homo sapiens (Human).